A 138-amino-acid chain; its full sequence is MRIMGLDVGSKTVGVAISDPLGWTAQGVETIQIDENRKQFGYDRVKELVLEYEVEKVVVGLPKNMNNTIGPRAESSKIYAEVLESRIGLPVVLWDERLTTSAAERTLIEADVSRKKRKEVIDKLAAVMILQSYLDTTN.

Belongs to the YqgF nuclease family.

The protein resides in the cytoplasm. In terms of biological role, could be a nuclease involved in processing of the 5'-end of pre-16S rRNA. This is Putative pre-16S rRNA nuclease from Listeria monocytogenes serotype 4b (strain CLIP80459).